The primary structure comprises 521 residues: Circadian clock oscillator protein KaiC (521 aa).

KaiC domains lie at 1–248 (MNEP…INIF) and 262–521 (ARIS…LDEE). Residues G50, T51, G52, K53, T54, L55, S90, K225, L226, R227, T229, H231, T241, T291, G292, T293, G294, K295, T296, and L297 each contribute to the ATP site. Residue T54 coordinates Mg(2+). T296 lines the Mg(2+) pocket. Residue E319 participates in Mg(2+) binding. Residue W332 coordinates ATP. Phosphoserine; by autocatalysis is present on S432. T433 is modified (phosphothreonine; by autocatalysis). R452, K458, M459, R460, S462, H464, and K466 together coordinate ATP.

It belongs to the KaiC family. Homohexamer; hexamerization is dependent on ATP-binding. The KaiABC complex composition changes during the circadian cycle to control KaiC phosphorylation. Complexes KaiC(6), KaiA(2-4):KaiC(6), KaiB(6):KaiC(6) and KaiC(6):KaiB(6):KaiA(12) are among the most important forms, many form cooperatively. KaiC interacts with SasA, activating its autokinase function and leading to RpaA activation. Requires Mg(2+) as cofactor. Post-translationally, phosphorylated on serine and threonine residues by autocatalysis. Has a 4 step phosphorylation cycle; the autokinase acts first on Thr-433, then Ser-432. When Ser-432 is modified KaiC switches to an autophosphatase mode, acting first on phospho-Thr-433 then phospho-Ser-432.

The catalysed reaction is L-seryl-[protein] + ATP = O-phospho-L-seryl-[protein] + ADP + H(+). It carries out the reaction L-threonyl-[protein] + ATP = O-phospho-L-threonyl-[protein] + ADP + H(+). The enzyme catalyses ATP + H2O = ADP + phosphate + H(+). The interaction with KaiA enhances its phosphorylation status, while the interaction with KaiB decreases it. Central component of the KaiABC oscillator complex, which constitutes the main circadian regulator in cyanobacteria. Complex composition changes during the circadian cycle to control KaiC phosphorylation. KaiA stimulates KaiC autophosphorylation, while KaiB sequesters KaiA, leading to KaiC autodephosphorylation. Clock output pathways impact the RpaA transcriptional regulator. KaiC enhances the autophosphorylation activity of SasA, which then transfers its phosphate group to RpaA to activate it. KaiB and KaiC together enhance the phospho-RpaA dephosphatase activity of CikA. Functionally, has a weak, temperature-independent ATPase activity; ATPase activity defines the circadian period. The phosphorylation state of KaiC modulates its ATPase activity and effects KaiB binding. In Rippkaea orientalis (strain PCC 8801 / RF-1) (Cyanothece sp. (strain PCC 8801)), this protein is Circadian clock oscillator protein KaiC.